A 252-amino-acid polypeptide reads, in one-letter code: Isoprenyl transferase 2 (252 aa).

Residue Asp26 is part of the active site. Asp26 is a binding site for Mg(2+). Residues 27–30 (GNGR), Trp31, Arg39, His43, and 71–73 (SSE) each bind substrate. Asn74 functions as the Proton acceptor in the catalytic mechanism. Substrate contacts are provided by residues Trp75, Arg77, Arg194, and 200-202 (RLS). Residue Glu213 participates in Mg(2+) binding.

This sequence belongs to the UPP synthase family. Homodimer. Mg(2+) serves as cofactor.

Functionally, catalyzes the condensation of isopentenyl diphosphate (IPP) with allylic pyrophosphates generating different type of terpenoids. In Bradyrhizobium diazoefficiens (strain JCM 10833 / BCRC 13528 / IAM 13628 / NBRC 14792 / USDA 110), this protein is Isoprenyl transferase 2.